We begin with the raw amino-acid sequence, 241 residues long: DNA repair protein RecO (241 aa).

The protein belongs to the RecO family.

Functionally, involved in DNA repair and RecF pathway recombination. The polypeptide is DNA repair protein RecO (Orientia tsutsugamushi (strain Boryong) (Rickettsia tsutsugamushi)).